The sequence spans 306 residues: TnpB-like protein aq_aa05 (306 aa).

Positions 213, 216, 234, and 237 each coordinate Zn(2+).

This sequence belongs to the transposase 35 family.

The sequence is that of TnpB-like protein aq_aa05 from Aquifex aeolicus (strain VF5).